A 312-amino-acid polypeptide reads, in one-letter code: Golgi to ER traffic protein 2 (312 aa).

Residues 1–175 lie on the Cytoplasmic side of the membrane; it reads MSDSPSISAE…VQYNTYRHQV (175 aa). The helical transmembrane segment at 176 to 196 threads the bilayer; sequence WKFRFLAVRYFALLANFIYHF. Residues 197–224 are Lumenal-facing; the sequence is YIIGDSISFASSSHQFIRELIPVEPARS. A helical membrane pass occupies residues 225-244; the sequence is FFTLFSTIEVVIIASYYFLG. Residues 245–288 are Cytoplasmic-facing; sequence TKEGFFSTATSNNFVVKLLDMGSMVLPQLQQFKTIAVRLLGYYE. The chain crosses the membrane as a helical span at residues 289-309; that stretch reads LLAVLLGDLSLVVVLFGLHSV. Over 310–312 the chain is Lumenal; it reads LGN.

The protein belongs to the GET2 family. In terms of assembly, component of the Golgi to ER traffic (GET) complex, which is composed of GET1, GET2 and GET3. Within the complex, GET1 and GET2 form a heterotetramer which is stabilized by phosphatidylinositol binding and which binds to the GET3 homodimer.

It localises to the endoplasmic reticulum membrane. It is found in the golgi apparatus membrane. In terms of biological role, required for the post-translational delivery of tail-anchored (TA) proteins to the endoplasmic reticulum. Together with GET1, acts as a membrane receptor for soluble GET3, which recognizes and selectively binds the transmembrane domain of TA proteins in the cytosol. The GET complex cooperates with the HDEL receptor ERD2 to mediate the ATP-dependent retrieval of resident ER proteins that contain a C-terminal H-D-E-L retention signal from the Golgi to the ER. The protein is Golgi to ER traffic protein 2 of Scheffersomyces stipitis (strain ATCC 58785 / CBS 6054 / NBRC 10063 / NRRL Y-11545) (Yeast).